The sequence spans 421 residues: Conjugal transfer protein TraB (421 aa).

The next 8 helical transmembrane spans lie at 33-53 (LLIL…ALLL), 103-123 (LLLW…FWPA), 144-164 (LAAA…AHPL), 169-189 (ILFP…LAMM), 193-213 (YWPA…ATWT), 287-307 (TVIA…MVTV), 366-386 (LIVW…VATG), and 388-408 (GWWT…IAWA). Positions 222–421 (KGVDLEQGQT…GRPVVTAFNT (200 aa)) constitute a CN hydrolase domain.

It localises to the cell membrane. Its function is as follows. Enhances conjugal transfer of the Ti plasmid. The sequence is that of Conjugal transfer protein TraB (traB) from Agrobacterium fabrum (strain C58 / ATCC 33970) (Agrobacterium tumefaciens (strain C58)).